A 131-amino-acid chain; its full sequence is Small ribosomal subunit protein uS8 (131 aa).

This sequence belongs to the universal ribosomal protein uS8 family. As to quaternary structure, part of the 30S ribosomal subunit. Contacts proteins S5 and S12.

One of the primary rRNA binding proteins, it binds directly to 16S rRNA central domain where it helps coordinate assembly of the platform of the 30S subunit. This chain is Small ribosomal subunit protein uS8, found in Burkholderia multivorans (strain ATCC 17616 / 249).